Consider the following 210-residue polypeptide: Thymidylate kinase (210 aa).

Gly-10–Ser-17 contacts ATP.

Belongs to the thymidylate kinase family.

The enzyme catalyses dTMP + ATP = dTDP + ADP. Functionally, phosphorylation of dTMP to form dTDP in both de novo and salvage pathways of dTTP synthesis. The polypeptide is Thymidylate kinase (Haemophilus influenzae (strain PittGG)).